The chain runs to 71 residues: Large ribosomal subunit protein uL29 (71 aa).

This sequence belongs to the universal ribosomal protein uL29 family. As to quaternary structure, part of the 50S ribosomal subunit. Interacts with protein L23.

Its function is as follows. Stabilizes the tertiary rRNA structure within the 23S rRNA domain (domain I) to which it binds. Located at the polypeptide exit tunnel on the outside of the subunit. The sequence is that of Large ribosomal subunit protein uL29 (rpl29) from Haloarcula marismortui (strain ATCC 43049 / DSM 3752 / JCM 8966 / VKM B-1809) (Halobacterium marismortui).